The sequence spans 161 residues: uncharacterized protein (161 aa).

The protein belongs to the SixA phosphatase family.

This is an uncharacterized protein from Mycobacterium leprae (strain TN).